Here is a 214-residue protein sequence, read N- to C-terminus: Outer membrane lipoprotein MapA (214 aa).

The first 17 residues, 1–17 (MFKKFLIFIVPILFLSA), serve as a signal peptide directing secretion. The N-palmitoyl cysteine moiety is linked to residue cysteine 18. The S-diacylglycerol cysteine moiety is linked to residue cysteine 18.

It is found in the cell outer membrane. This chain is Outer membrane lipoprotein MapA (mapA), found in Campylobacter jejuni subsp. jejuni serotype O:6 (strain 81116 / NCTC 11828).